The sequence spans 272 residues: N-acetylmuramoyl-L-alanine amidase CwlA (272 aa).

The region spanning 24–142 is the N-acetylmuramoyl-L-alanine amidase domain; that stretch reads KAEYITIHNT…QDWNGKYCPH (119 aa).

Belongs to the N-acetylmuramoyl-L-alanine amidase 2 family.

It catalyses the reaction Hydrolyzes the link between N-acetylmuramoyl residues and L-amino acid residues in certain cell-wall glycopeptides.. In terms of biological role, autolysins are involved in some important biological processes such as cell separation, cell-wall turnover, competence for genetic transformation, formation of the flagella and sporulation. The polypeptide is N-acetylmuramoyl-L-alanine amidase CwlA (cwlA) (Bacillus subtilis (strain 168)).